The sequence spans 504 residues: Histidine ammonia-lyase (504 aa).

Residues 141–143 (ASG) constitute a cross-link (5-imidazolinone (Ala-Gly)). Position 142 is a 2,3-didehydroalanine (Ser) (S142).

It belongs to the PAL/histidase family. In terms of processing, contains an active site 4-methylidene-imidazol-5-one (MIO), which is formed autocatalytically by cyclization and dehydration of residues Ala-Ser-Gly.

The protein resides in the cytoplasm. The catalysed reaction is L-histidine = trans-urocanate + NH4(+). It functions in the pathway amino-acid degradation; L-histidine degradation into L-glutamate; N-formimidoyl-L-glutamate from L-histidine: step 1/3. In Geobacillus thermodenitrificans (strain NG80-2), this protein is Histidine ammonia-lyase.